The sequence spans 350 residues: Serine-threonine kinase receptor-associated protein (350 aa).

WD repeat units lie at residues 12-56 (GHTR…GTFL), 57-96 (GHKG…ELMT), 98-137 (AHKH…AEPK), 141-179 (GHTS…EVKS), 180-212 (LNFN…HSAV), 221-262 (EAPA…ESYK), and 263-302 (GHFG…TYGL). 3 positions are modified to phosphoserine: Ser312, Ser335, and Ser338.

It belongs to the WD repeat STRAP family. Part of the core SMN complex that contains SMN1, GEMIN2/SIP1, DDX20/GEMIN3, GEMIN4, GEMIN5, GEMIN6, GEMIN7, GEMIN8 and STRAP/UNRIP. Part of the SMN-Sm complex that contains SMN1, GEMIN2/SIP1, DDX20/GEMIN3, GEMIN4, GEMIN5, GEMIN6, GEMIN7, GEMIN8, STRAP/UNRIP and the Sm proteins SNRPB, SNRPD1, SNRPD2, SNRPD3, SNRPE, SNRPF and SNRPG. Associates with the SMN complex in the cytoplasm but not in the nucleus. Interacts with GEMIN6; the interaction is direct. Interacts with GEMIN7; the interaction is direct. Interacts with CSDE1/UNR and MAWBP. Interacts with PDPK1. Interacts with TRIM48.

The protein localises to the cytoplasm. Its subcellular location is the nucleus. Functionally, the SMN complex catalyzes the assembly of small nuclear ribonucleoproteins (snRNPs), the building blocks of the spliceosome, and thereby plays an important role in the splicing of cellular pre-mRNAs. Most spliceosomal snRNPs contain a common set of Sm proteins SNRPB, SNRPD1, SNRPD2, SNRPD3, SNRPE, SNRPF and SNRPG that assemble in a heptameric protein ring on the Sm site of the small nuclear RNA to form the core snRNP (Sm core). In the cytosol, the Sm proteins SNRPD1, SNRPD2, SNRPE, SNRPF and SNRPG are trapped in an inactive 6S pICln-Sm complex by the chaperone CLNS1A that controls the assembly of the core snRNP. To assemble core snRNPs, the SMN complex accepts the trapped 5Sm proteins from CLNS1A forming an intermediate. Binding of snRNA inside 5Sm triggers eviction of the SMN complex, thereby allowing binding of SNRPD3 and SNRPB to complete assembly of the core snRNP. STRAP plays a role in the cellular distribution of the SMN complex. Negatively regulates TGF-beta signaling but positively regulates the PDPK1 kinase activity by enhancing its autophosphorylation and by significantly reducing the association of PDPK1 with 14-3-3 protein. This chain is Serine-threonine kinase receptor-associated protein (STRAP), found in Homo sapiens (Human).